Reading from the N-terminus, the 118-residue chain is MARIAGINVPDNKHAVIALTAIYGVGRTRSQQILAATGIAEDTKIGSLSEDKLDALRDAVSKFAVEGDLRREVSMNIKRLMDLGCFRGLRHRRSLPLRGQRTKTNARTRKGPRKPIKK.

The tract at residues S94–K118 is disordered.

Belongs to the universal ribosomal protein uS13 family. In terms of assembly, part of the 30S ribosomal subunit. Forms a loose heterodimer with protein S19. Forms two bridges to the 50S subunit in the 70S ribosome.

Located at the top of the head of the 30S subunit, it contacts several helices of the 16S rRNA. In the 70S ribosome it contacts the 23S rRNA (bridge B1a) and protein L5 of the 50S subunit (bridge B1b), connecting the 2 subunits; these bridges are implicated in subunit movement. Contacts the tRNAs in the A and P-sites. This is Small ribosomal subunit protein uS13 from Idiomarina loihiensis (strain ATCC BAA-735 / DSM 15497 / L2-TR).